We begin with the raw amino-acid sequence, 419 residues long: Protein FAM217A (419 aa).

Disordered stretches follow at residues Met1–Leu23, Asp100–Ser119, Pro234–Leu298, and Pro362–Ser388. Over residues Glu7–Leu23 the composition is skewed to polar residues. The span at Ser284 to Leu298 shows a compositional bias: polar residues. The span at Pro378–Ser388 shows a compositional bias: basic residues.

Belongs to the FAM217 family.

The protein is Protein FAM217A (Fam217a) of Rattus norvegicus (Rat).